The following is a 135-amino-acid chain: MEPAIGICNLGGTAESRVVFEPVILTKEDIAEIFSDKKSKKFLSHIKFVDFDKMKGELILIDDGVVAVCRQRQENKVFVLVKIIGKEEDFLMAYEVEDSSYRIYLESSCSEISVSKFCRNSACWAVPVYILFPSL.

This is an uncharacterized protein from Archaeoglobus fulgidus (strain ATCC 49558 / DSM 4304 / JCM 9628 / NBRC 100126 / VC-16).